Here is a 1335-residue protein sequence, read N- to C-terminus: Bifunctional autolysin (1335 aa).

A signal peptide spans 1-29 (MAKKFNYKLPSMVALTLFGTAFTAHQANA). Disordered regions lie at residues 51–88 (QAEKAKSEVTQSTTNVSGTQTYQDPTQVQPKQDTQSTT), 100–262 (NEIS…KYKE), and 514–535 (WGTTSTKPSQPSKPSGGTNNKL). Composition is skewed to polar residues over residues 58–88 (EVTQSTTNVSGTQTYQDPTQVQPKQDTQSTT), 100–127 (NEISSNQKQQSLSTDDANQNQTNSVTKN), 143–155 (TDTNQLQETQSVA), 176–223 (TASQ…NASG), and 244–258 (SLNNVNATSKQTTSY). Residues 303–863 (VSSQKTSSLP…LSTQSTPAPK (561 aa)) are N-acetylmuramoyl-L-alanine amidase. Positions 515-531 (GTTSTKPSQPSKPSGGT) are enriched in low complexity. GW domains lie at 533-610 (NKLT…YNTA), 612-686 (APVK…TASK), 700-774 (TVTN…YNTA), 776-850 (SPVK…APSK), 868-943 (STQT…TQNI), 945-1020 (KQTQ…QNST), and 1023-1096 (QSTP…KEKI). The tract at residues 864–1335 (QVKPSTQTVN…GKYFEIPTYK (472 aa)) is endo-beta-N-acetylglucosaminidase.

It in the N-terminal section; belongs to the N-acetylmuramoyl-L-alanine amidase 2 family. In the C-terminal section; belongs to the glycosyl hydrolase 73 family. As to quaternary structure, oligomer; forms a ring structure at the cell surface which is important for efficient partitioning of daughter cells after cell division. Undergoes proteolytic processing to generate the two extracellular lytic enzymes, probably at the septal region on the cell surface.

Its subcellular location is the secreted. It catalyses the reaction Hydrolyzes the link between N-acetylmuramoyl residues and L-amino acid residues in certain cell-wall glycopeptides.. The enzyme catalyses an N(4)-(oligosaccharide-(1-&gt;3)-[oligosaccharide-(1-&gt;6)]-beta-D-Man-(1-&gt;4)-beta-D-GlcNAc-(1-&gt;4)-alpha-D-GlcNAc)-L-asparaginyl-[protein] + H2O = an oligosaccharide-(1-&gt;3)-[oligosaccharide-(1-&gt;6)]-beta-D-Man-(1-&gt;4)-D-GlcNAc + N(4)-(N-acetyl-beta-D-glucosaminyl)-L-asparaginyl-[protein]. Functionally, endohydrolysis of the di-N-acetylchitobiosyl unit in high-mannose glycopeptides and glycoproteins containing the -[(Man)5(GlcNAc)2]-Asn structure. One N-acetyl-D-glucosamine residue remains attached to the protein; the rest of the oligosaccharide is released intact. Cleaves the peptidoglycan connecting the daughter cells at the end of the cell division cycle, resulting in the separation of the two newly divided cells. Acts as an autolysin in penicillin-induced lysis. As a bacterial surface-associated protein, mediates attachment to polystyrene surfaces, contributing to biofilm formation. Also has vitronectin-binding activity. This chain is Bifunctional autolysin (atl), found in Staphylococcus epidermidis.